Here is a 160-residue protein sequence, read N- to C-terminus: Ribosomal RNA large subunit methyltransferase H (160 aa).

S-adenosyl-L-methionine contacts are provided by residues L77, G109, and 128–133 (FSRLTF).

Belongs to the RNA methyltransferase RlmH family. Homodimer.

It localises to the cytoplasm. The enzyme catalyses pseudouridine(1915) in 23S rRNA + S-adenosyl-L-methionine = N(3)-methylpseudouridine(1915) in 23S rRNA + S-adenosyl-L-homocysteine + H(+). Specifically methylates the pseudouridine at position 1915 (m3Psi1915) in 23S rRNA. This Desulfitobacterium hafniense (strain DSM 10664 / DCB-2) protein is Ribosomal RNA large subunit methyltransferase H.